A 478-amino-acid polypeptide reads, in one-letter code: Transposase for insertion sequence element IS231C (478 aa).

It belongs to the transposase 11 family.

Involved in the transposition of the insertion sequence. The protein is Transposase for insertion sequence element IS231C of Bacillus thuringiensis subsp. berliner.